A 66-amino-acid polypeptide reads, in one-letter code: MLVRTTADFRYCGIFVSVNRVTPELWWGVMGRLRPAGFTNASLSTLSRPATCLTAGSRLLNLLVRP.

Repressor of the ant/reb gene. This chain is Repressor protein C4 (C4), found in Escherichia phage P1 (Bacteriophage P1).